A 229-amino-acid polypeptide reads, in one-letter code: 7-cyano-7-deazaguanine synthase (229 aa).

15–25 (LSGGLDSATVV) contributes to the ATP binding site. Residues Cys194, Cys204, Cys207, and Cys210 each coordinate Zn(2+).

This sequence belongs to the QueC family. Requires Zn(2+) as cofactor.

The enzyme catalyses 7-carboxy-7-deazaguanine + NH4(+) + ATP = 7-cyano-7-deazaguanine + ADP + phosphate + H2O + H(+). Its pathway is purine metabolism; 7-cyano-7-deazaguanine biosynthesis. Its function is as follows. Catalyzes the ATP-dependent conversion of 7-carboxy-7-deazaguanine (CDG) to 7-cyano-7-deazaguanine (preQ(0)). The protein is 7-cyano-7-deazaguanine synthase of Pseudomonas syringae pv. syringae (strain B728a).